Consider the following 124-residue polypeptide: Small ribosomal subunit protein uS13 (124 aa).

The disordered stretch occupies residues 96-124 (LPVRGQRTKTNARTRKGPRRTVAGKKKAK).

It belongs to the universal ribosomal protein uS13 family. Part of the 30S ribosomal subunit. Forms a loose heterodimer with protein S19. Forms two bridges to the 50S subunit in the 70S ribosome.

Functionally, located at the top of the head of the 30S subunit, it contacts several helices of the 16S rRNA. In the 70S ribosome it contacts the 23S rRNA (bridge B1a) and protein L5 of the 50S subunit (bridge B1b), connecting the 2 subunits; these bridges are implicated in subunit movement. Contacts the tRNAs in the A and P-sites. In Symbiobacterium thermophilum (strain DSM 24528 / JCM 14929 / IAM 14863 / T), this protein is Small ribosomal subunit protein uS13.